The primary structure comprises 401 residues: 8-amino-7-oxononanoate synthase (401 aa).

Arginine 24 lines the substrate pocket. 111–112 (GF) is a pyridoxal 5'-phosphate binding site. Histidine 137 serves as a coordination point for substrate. Pyridoxal 5'-phosphate-binding residues include serine 183, histidine 211, and threonine 240. At lysine 243 the chain carries N6-(pyridoxal phosphate)lysine. Residue threonine 357 participates in substrate binding.

Belongs to the class-II pyridoxal-phosphate-dependent aminotransferase family. BioF subfamily. In terms of assembly, homodimer. The cofactor is pyridoxal 5'-phosphate.

The enzyme catalyses 6-carboxyhexanoyl-[ACP] + L-alanine + H(+) = (8S)-8-amino-7-oxononanoate + holo-[ACP] + CO2. Its pathway is cofactor biosynthesis; biotin biosynthesis. Functionally, catalyzes the decarboxylative condensation of pimeloyl-[acyl-carrier protein] and L-alanine to produce 8-amino-7-oxononanoate (AON), [acyl-carrier protein], and carbon dioxide. The polypeptide is 8-amino-7-oxononanoate synthase (Xylella fastidiosa (strain 9a5c)).